Consider the following 432-residue polypeptide: Adenylosuccinate synthetase (432 aa).

GTP contacts are provided by residues 12–18 and 40–42; these read GDEGKGK and GHT. The Proton acceptor role is filled by D13. Mg(2+) contacts are provided by D13 and G40. IMP contacts are provided by residues 13–16, 38–41, T132, R146, Q226, T241, and R305; these read DEGK and NAGH. Catalysis depends on H41, which acts as the Proton donor. 301–307 serves as a coordination point for substrate; it reads VVTGRKR. GTP contacts are provided by residues R307, 333 to 335, and 415 to 417; these read KLD and STS.

Belongs to the adenylosuccinate synthetase family. As to quaternary structure, homodimer. Requires Mg(2+) as cofactor.

It localises to the cytoplasm. The enzyme catalyses IMP + L-aspartate + GTP = N(6)-(1,2-dicarboxyethyl)-AMP + GDP + phosphate + 2 H(+). It functions in the pathway purine metabolism; AMP biosynthesis via de novo pathway; AMP from IMP: step 1/2. Its function is as follows. Plays an important role in the de novo pathway of purine nucleotide biosynthesis. Catalyzes the first committed step in the biosynthesis of AMP from IMP. In Rhizobium etli (strain CIAT 652), this protein is Adenylosuccinate synthetase.